The primary structure comprises 281 residues: Pantothenate synthetase (281 aa).

30–37 (MGNLHQGH) lines the ATP pocket. H37 acts as the Proton donor in catalysis. Position 61 (Q61) interacts with (R)-pantoate. Q61 contacts beta-alanine. ATP is bound at residue 149–152 (GNKD). Q155 is a (R)-pantoate binding site. ATP contacts are provided by residues I178 and 186–189 (MSSR).

The protein belongs to the pantothenate synthetase family. Homodimer.

Its subcellular location is the cytoplasm. The enzyme catalyses (R)-pantoate + beta-alanine + ATP = (R)-pantothenate + AMP + diphosphate + H(+). Its pathway is cofactor biosynthesis; (R)-pantothenate biosynthesis; (R)-pantothenate from (R)-pantoate and beta-alanine: step 1/1. Its function is as follows. Catalyzes the condensation of pantoate with beta-alanine in an ATP-dependent reaction via a pantoyl-adenylate intermediate. The chain is Pantothenate synthetase from Shewanella baltica (strain OS223).